A 130-amino-acid chain; its full sequence is B1 protein (130 aa).

Residues 1–12 (LTSLILLVAVQA) form the signal peptide. 2 disulfide bridges follow: Cys28/Cys59 and Cys99/Cys116.

Belongs to the PBP/GOBP family. N-glycosylated. In terms of tissue distribution, tubular accessory sex gland.

The protein resides in the secreted. Functionally, may be a carrier protein for lipids. In Tenebrio molitor (Yellow mealworm beetle), this protein is B1 protein.